We begin with the raw amino-acid sequence, 176 residues long: Probable chorismate pyruvate-lyase (176 aa).

Substrate contacts are provided by Arg70, Leu108, and Glu166.

Belongs to the UbiC family.

The protein localises to the cytoplasm. The enzyme catalyses chorismate = 4-hydroxybenzoate + pyruvate. It functions in the pathway cofactor biosynthesis; ubiquinone biosynthesis. Removes the pyruvyl group from chorismate, with concomitant aromatization of the ring, to provide 4-hydroxybenzoate (4HB) for the ubiquinone pathway. The sequence is that of Probable chorismate pyruvate-lyase from Dechloromonas aromatica (strain RCB).